The chain runs to 256 residues: 5-keto-4-deoxy-D-glucarate aldolase (256 aa).

The active-site Proton acceptor is the His-50. Gln-151 lines the substrate pocket. Mg(2+) is bound at residue Glu-153. Substrate is bound by residues Ser-178 and Asp-179. Asp-179 provides a ligand contact to Mg(2+).

This sequence belongs to the HpcH/HpaI aldolase family. KDGluc aldolase subfamily. In terms of assembly, homohexamer; trimer of dimers. It depends on Mg(2+) as a cofactor.

It carries out the reaction 5-dehydro-4-deoxy-D-glucarate = 2-hydroxy-3-oxopropanoate + pyruvate. It catalyses the reaction 2-dehydro-3-deoxy-D-glucarate = 2-hydroxy-3-oxopropanoate + pyruvate. It functions in the pathway carbohydrate acid metabolism; galactarate degradation; D-glycerate from galactarate: step 2/3. Functionally, catalyzes the reversible retro-aldol cleavage of both 5-keto-4-deoxy-D-glucarate and 2-keto-3-deoxy-D-glucarate to pyruvate and tartronic semialdehyde. This chain is 5-keto-4-deoxy-D-glucarate aldolase, found in Enterobacter sp. (strain 638).